A 412-amino-acid chain; its full sequence is B3 domain-containing protein Os02g0683500 (412 aa).

Residues 1–87 form a disordered region; sequence MEFTTSSRFS…GGGGGGGGEA (87 aa). Positions 30 to 65 are enriched in low complexity; it reads TATAEAAPAPTSSSSSPAHHAASASASASASGSSTP. Residues 73–86 are compositionally biased toward gly residues; that stretch reads GASGSGGGGGGGGE. Residues 96–200 constitute a DNA-binding region (TF-B3); sequence FDKVVTPSDV…RHRLFIDWKR (105 aa). Residues 374–412 are disordered; the sequence is RLLELPPHHHHGAESSAASSPSSSSSSKRDAHSALDLDL. Residues 387 to 399 show a composition bias toward low complexity; the sequence is ESSAASSPSSSSS. Residues 400-412 are compositionally biased toward basic and acidic residues; that stretch reads SKRDAHSALDLDL.

Its subcellular location is the nucleus. The sequence is that of B3 domain-containing protein Os02g0683500 from Oryza sativa subsp. japonica (Rice).